The following is a 312-amino-acid chain: Malate dehydrogenase (312 aa).

Residues 7-13 and D34 contribute to the NAD(+) site; that span reads GAAGGIG. The substrate site is built by R81 and R87. NAD(+)-binding positions include N94 and 117–119; that span reads ITN. Positions 119 and 153 each coordinate substrate. H177 acts as the Proton acceptor in catalysis. M227 provides a ligand contact to NAD(+).

The protein belongs to the LDH/MDH superfamily. MDH type 1 family. As to quaternary structure, homodimer.

It carries out the reaction (S)-malate + NAD(+) = oxaloacetate + NADH + H(+). Its function is as follows. Catalyzes the reversible oxidation of malate to oxaloacetate. The chain is Malate dehydrogenase from Citrobacter koseri (strain ATCC BAA-895 / CDC 4225-83 / SGSC4696).